A 674-amino-acid chain; its full sequence is Methionine--tRNA ligase (674 aa).

The 'HIGH' region motif lies at 11 to 21; it reads PYANGDLHLGH. Zn(2+) contacts are provided by cysteine 142, cysteine 145, cysteine 155, and cysteine 158. Residues 330-334 carry the 'KMSKS' region motif; the sequence is KMSKS. Lysine 333 contacts ATP. In terms of domain architecture, tRNA-binding spans 574–674; that stretch reads DFMKVDLRIA…EGAQPGMRVK (101 aa).

The protein belongs to the class-I aminoacyl-tRNA synthetase family. MetG type 1 subfamily. Homodimer. Zn(2+) is required as a cofactor.

It localises to the cytoplasm. The catalysed reaction is tRNA(Met) + L-methionine + ATP = L-methionyl-tRNA(Met) + AMP + diphosphate. Its function is as follows. Is required not only for elongation of protein synthesis but also for the initiation of all mRNA translation through initiator tRNA(fMet) aminoacylation. This chain is Methionine--tRNA ligase, found in Francisella tularensis subsp. holarctica (strain OSU18).